Here is a 91-residue protein sequence, read N- to C-terminus: Small ribosomal subunit protein bS16 (91 aa).

The protein belongs to the bacterial ribosomal protein bS16 family.

This is Small ribosomal subunit protein bS16 from Staphylococcus aureus (strain Mu3 / ATCC 700698).